The primary structure comprises 290 residues: Potassium-transporting ATPase subunit beta (290 aa).

Residues 1 to 36 (MAALQEKKSCSQRMEEFQRYCWNPDTGQMLGRTLSR) lie on the Cytoplasmic side of the membrane. A helical; Signal-anchor for type II membrane protein membrane pass occupies residues 37 to 57 (WVWISLYYVAFYVVMTGIFAL). The Extracellular portion of the chain corresponds to 58–290 (CIYTLMCTLD…KVEFKLTIQQ (233 aa)). Residues Asn99, Asn103, Asn130, Asn146, and Asn161 are each glycosylated (N-linked (GlcNAc...) asparagine). A disulfide bond links Cys131 and Cys152. The cysteines at positions 162 and 178 are disulfide-linked. N-linked (GlcNAc...) asparagine glycans are attached at residues Asn193 and Asn221. Residues 194-290 (STAPRADCTF…KVEFKLTIQQ (97 aa)) are immunoglobulin-like. A disulfide bridge links Cys201 with Cys262.

Belongs to the X(+)/potassium ATPases subunit beta family. The ATPase pump is composed of two subunits: alpha (catalytic) and beta (regulatory). Interacts with alpha subunit ATP12A; this interaction is required for the formation of a functionally active pump and targeting at the plasma membrane. Interacts (via N-terminus) with alpha subunit ATP4A (via the P-domain). Post-translationally, N-glycosylation is necessary for assembly and functional expression of the pump at the plasma membrane.

It localises to the apical cell membrane. It is found in the cell membrane. In terms of biological role, the beta subunit of the gastric H(+)/K(+) ATPase pump which transports H(+) ions in exchange for K(+) ions across the apical membrane of parietal cells. Plays a structural and regulatory role in the assembly and membrane targeting of a functionally active pump. Within a transport cycle, the transfer of a H(+) ion across the membrane is coupled to ATP hydrolysis and is associated with a transient phosphorylation of the alpha subunit that shifts the pump conformation from inward-facing (E1) to outward-facing state (E2). Interacts with the phosphorylation domain of the alpha subunit and functions as a ratchet, stabilizing the lumenal-open E2 conformation and preventing the reverse reaction of the transport cycle. This chain is Potassium-transporting ATPase subunit beta (ATP4B), found in Canis lupus familiaris (Dog).